The sequence spans 399 residues: Inositol polyphosphate 1-phosphatase (399 aa).

Aspartate 54 is a binding site for Li(+). Glutamate 79 contacts Mg(2+). Glutamate 80 contacts Li(+). Mg(2+) contacts are provided by aspartate 153 and isoleucine 155. 1D-myo-inositol 1,4-bisphosphate-binding residues include aspartate 156, serine 157, threonine 158, serine 267, lysine 269, glycine 289, alanine 290, lysine 293, and threonine 311. Residue aspartate 316 participates in Mg(2+) binding. Phosphoserine is present on serine 317.

Belongs to the inositol monophosphatase superfamily. Monomer. It depends on Mg(2+) as a cofactor. In terms of tissue distribution, ubiquitously expressed, with highest levels in pancreas and kidney.

The catalysed reaction is 1D-myo-inositol 1,4-bisphosphate + H2O = 1D-myo-inositol 4-phosphate + phosphate. It catalyses the reaction 1D-myo-inositol 1,3,4-trisphosphate + H2O = 1D-myo-inositol 3,4-bisphosphate + phosphate. It functions in the pathway signal transduction; phosphatidylinositol signaling pathway. With respect to regulation, inhibited by Li(+). Mg(2+)-dependent phosphatase that catalyzes the hydrolysis of the 1-position phosphate from inositol 1,4-bisphosphate and inositol 1,3,4-trisphosphate and participates in inositol phosphate metabolism. This is Inositol polyphosphate 1-phosphatase from Homo sapiens (Human).